The chain runs to 206 residues: Large ribosomal subunit protein uL4 (206 aa).

The disordered stretch occupies residues 51 to 96 (LTRAEVKHSTKKPFRQKGTGNARAGMTSTPNRRGGGRAFPNKPDEN).

It belongs to the universal ribosomal protein uL4 family. Part of the 50S ribosomal subunit.

In terms of biological role, one of the primary rRNA binding proteins, this protein initially binds near the 5'-end of the 23S rRNA. It is important during the early stages of 50S assembly. It makes multiple contacts with different domains of the 23S rRNA in the assembled 50S subunit and ribosome. Forms part of the polypeptide exit tunnel. The chain is Large ribosomal subunit protein uL4 from Chromobacterium violaceum (strain ATCC 12472 / DSM 30191 / JCM 1249 / CCUG 213 / NBRC 12614 / NCIMB 9131 / NCTC 9757 / MK).